We begin with the raw amino-acid sequence, 44 residues long: U9-ctenitoxin-Co1a (44 aa).

4 cysteine pairs are disulfide-bonded: Cys-3–Cys-17, Cys-10–Cys-23, Cys-16–Cys-33, and Cys-25–Cys-31.

In terms of tissue distribution, expressed by the venom gland.

It localises to the secreted. Insecticidal neurotoxin that reversibly inhibits the N-methyl-D-aspartate (NMDA)-subtype of ionotropic glutamate receptor (GRIN) and inhibits inactivation of insect sodium channels (Nav). In vivo, is highly toxic to insects. This Ctenus ornatus (Brazilian spider) protein is U9-ctenitoxin-Co1a.